Reading from the N-terminus, the 352-residue chain is Photosystem II D2 protein (352 aa).

At 1-31 (MTIAVGRAPVERGWFDVLDDWLKRDRFVFIG) the chain is on the cytoplasmic side. The helical transmembrane segment at 32 to 53 (WSGLLLFPCAFMALGGWLTGTT) threads the bilayer. Residues 54 to 108 (FVTSWYTHGLASSYLEGANFLTVAVSSPADAFGHSLLFLWGPEAQGNLTRWFQIG) are Lumenal, thylakoid-facing. The chain crosses the membrane as a helical span at residues 109-131 (GLWPFVALHGAFGLIGFMLRQFE). Residue H117 coordinates chlorophyll a. Residue Q129 coordinates pheophytin a. Residues 132–140 (ISRLVGIRP) are Cytoplasmic-facing. Residues 141-162 (YNAIAFSGPIAVFVSVFLMYPL) traverse the membrane as a helical segment. Position 142 (N142) interacts with pheophytin a. Topologically, residues 163–190 (GQSSWFFAPSFGVAGIFRFILFLQGFHN) are lumenal, thylakoid. Residues 191 to 217 (WTLNPFHMMGVAGILGGALLCAIHGAT) form a helical membrane-spanning segment. Residue H197 participates in chlorophyll a binding. H214 and F261 together coordinate a plastoquinone. H214 contacts Fe cation. Over 218-265 (VENTLFEDGEDSNTFRAFEPTQAEETYSMVTANRFWSQIFGIAFSNKR) the chain is Cytoplasmic. A helical transmembrane segment spans residues 266–288 (WLHFFMLFVPVTGLWMSSVGIVG). H268 lines the Fe cation pocket. At 289–352 (LALNLRAYDF…EEVLPRGNAL (64 aa)) the chain is on the lumenal, thylakoid side.

Belongs to the reaction center PufL/M/PsbA/D family. In terms of assembly, PSII is composed of 1 copy each of membrane proteins PsbA, PsbB, PsbC, PsbD, PsbE, PsbF, PsbH, PsbI, PsbJ, PsbK, PsbL, PsbM, PsbT, PsbX, PsbY, PsbZ, Psb30/Ycf12, peripheral proteins PsbO, CyanoQ (PsbQ), PsbU, PsbV and a large number of cofactors. It forms dimeric complexes. The D1/D2 heterodimer binds P680, chlorophylls that are the primary electron donor of PSII, and subsequent electron acceptors. It shares a non-heme iron and each subunit binds pheophytin, quinone, additional chlorophylls, carotenoids and lipids. There is also a Cl(-1) ion associated with D1 and D2, which is required for oxygen evolution. The PSII complex binds additional chlorophylls, carotenoids and specific lipids. is required as a cofactor.

The protein localises to the cellular thylakoid membrane. The catalysed reaction is 2 a plastoquinone + 4 hnu + 2 H2O = 2 a plastoquinol + O2. In terms of biological role, photosystem II (PSII) is a light-driven water:plastoquinone oxidoreductase that uses light energy to abstract electrons from H(2)O, generating O(2) and a proton gradient subsequently used for ATP formation. It consists of a core antenna complex that captures photons, and an electron transfer chain that converts photonic excitation into a charge separation. The D1/D2 (PsbA/PsbD) reaction center heterodimer binds P680, the primary electron donor of PSII as well as several subsequent electron acceptors. D2 is needed for assembly of a stable PSII complex. This Synechocystis sp. (strain ATCC 27184 / PCC 6803 / Kazusa) protein is Photosystem II D2 protein.